The primary structure comprises 439 residues: GlutamylGlutaminyl-tRNA synthetase (439 aa).

Residues P6 to N16 carry the 'HIGH' region motif. The short motif at K232–R236 is the 'KMSKS' region element. Residue K235 participates in ATP binding.

It belongs to the class-I aminoacyl-tRNA synthetase family. Glutamate--tRNA ligase type 1 subfamily. Monomer.

The protein localises to the cytoplasm. The catalysed reaction is tRNA(Glu) + L-glutamate + ATP = L-glutamyl-tRNA(Gln) + AMP + diphosphate. In terms of biological role, aminoacylates tRNA(Gln) with glutamate. Does not aminoacylate tRNA(Glu). This Helicobacter pylori (strain ATCC 700392 / 26695) (Campylobacter pylori) protein is GlutamylGlutaminyl-tRNA synthetase (gltX2).